The following is a 122-amino-acid chain: Small ribosomal subunit protein uS12 (122 aa).

Asp-89 carries the 3-methylthioaspartic acid modification.

It belongs to the universal ribosomal protein uS12 family. In terms of assembly, part of the 30S ribosomal subunit. Contacts proteins S8 and S17. May interact with IF1 in the 30S initiation complex.

Its function is as follows. With S4 and S5 plays an important role in translational accuracy. Functionally, interacts with and stabilizes bases of the 16S rRNA that are involved in tRNA selection in the A site and with the mRNA backbone. Located at the interface of the 30S and 50S subunits, it traverses the body of the 30S subunit contacting proteins on the other side and probably holding the rRNA structure together. The combined cluster of proteins S8, S12 and S17 appears to hold together the shoulder and platform of the 30S subunit. The protein is Small ribosomal subunit protein uS12 of Corynebacterium glutamicum (strain R).